The following is a 161-amino-acid chain: 3-isopropylmalate dehydratase small subunit (161 aa).

Belongs to the LeuD family. LeuD type 2 subfamily. Heterodimer of LeuC and LeuD.

It catalyses the reaction (2R,3S)-3-isopropylmalate = (2S)-2-isopropylmalate. It participates in amino-acid biosynthesis; L-leucine biosynthesis; L-leucine from 3-methyl-2-oxobutanoate: step 2/4. Catalyzes the isomerization between 2-isopropylmalate and 3-isopropylmalate, via the formation of 2-isopropylmaleate. This is 3-isopropylmalate dehydratase small subunit from Sulfolobus acidocaldarius (strain ATCC 33909 / DSM 639 / JCM 8929 / NBRC 15157 / NCIMB 11770).